A 260-amino-acid chain; its full sequence is Putative hydro-lyase Bmul_5125/BMULJ_03391 (260 aa).

It belongs to the D-glutamate cyclase family.

The chain is Putative hydro-lyase Bmul_5125/BMULJ_03391 from Burkholderia multivorans (strain ATCC 17616 / 249).